We begin with the raw amino-acid sequence, 357 residues long: MAGNTIGQLFQVTTFGESHGIALGCIVDGVPPGLSLSEADIQPDLDRRKPGTSRYTTPRREDDEVQILSGVFEGKTTGTSIGMIIKNADQRSQDYGDIKDRFRPGHADFTYQQKYGIRDYRGGGRSSARETAMRVAAGAIAKKYLREHFGVEVRGFLAQIGDVAIAPQVIEQIDWQQVNSNPFFCPDPSAVEKFDELIRQLKKEGDSIGAKLTVVAENVPVGLGEPVFDRLDADLAHALMGINAVKAVEIGDGFAVVNQRGSAHRDEMTPEGFLSNHAGGILGGISSGQPIVATIALKPTSSITIPGRSVNLANEPVEVITKGRHDPCVGIRAVPIAEAMVAIVLLDHLLRHKAQNR.

NADP(+)-binding residues include arginine 48 and arginine 54. FMN is bound by residues 125 to 127, 243 to 244, glycine 283, 298 to 302, and arginine 324; these read RSS, NA, and KPTSS.

It belongs to the chorismate synthase family. Homotetramer. FMNH2 serves as cofactor.

It carries out the reaction 5-O-(1-carboxyvinyl)-3-phosphoshikimate = chorismate + phosphate. It functions in the pathway metabolic intermediate biosynthesis; chorismate biosynthesis; chorismate from D-erythrose 4-phosphate and phosphoenolpyruvate: step 7/7. Catalyzes the anti-1,4-elimination of the C-3 phosphate and the C-6 proR hydrogen from 5-enolpyruvylshikimate-3-phosphate (EPSP) to yield chorismate, which is the branch point compound that serves as the starting substrate for the three terminal pathways of aromatic amino acid biosynthesis. This reaction introduces a second double bond into the aromatic ring system. This chain is Chorismate synthase, found in Pasteurella multocida (strain Pm70).